A 738-amino-acid chain; its full sequence is LPS-assembly protein LptD (738 aa).

Positions 1 to 26 (MEHKRNNILLAGLFFLLLGLVSIARA) are cleaved as a signal peptide.

Belongs to the LptD family. As to quaternary structure, component of the lipopolysaccharide transport and assembly complex. Interacts with LptE and LptA.

Its subcellular location is the cell outer membrane. Functionally, together with LptE, is involved in the assembly of lipopolysaccharide (LPS) at the surface of the outer membrane. This Nitrosococcus oceani (strain ATCC 19707 / BCRC 17464 / JCM 30415 / NCIMB 11848 / C-107) protein is LPS-assembly protein LptD.